The sequence spans 311 residues: MSENQQTNQKEQYNLNKLQKRLRRNVGEAIADFNMIEEGDRIMVCLSGGKDSFTMLEILRNLQQSAPINFSLVAVNLDQKQPGFPEHILPQYLDNIGVEYKIVEENTYGIVKDKIPEGKTTCSLCSRLRRGILYRTATELGATKIALGHHRDDILQTLFLNMFYGGKLKGMPPKLMSDDGKHIVIRPLAYCREKDIERFAEARQYPIIPCNLCGSQPNLQRQVIKDMLRDWDKRHPGRIETMFSAMQNVVPSHLADHALFDFKNIRHGSDVVDGGDLAFDREELPLQPAGWQPEEDDDASPITRLDVLEIK.

The PP-loop motif motif lies at 47–52; that stretch reads SGGKDS. Residues cysteine 122, cysteine 125, and cysteine 213 each coordinate [4Fe-4S] cluster.

It belongs to the TtcA family. In terms of assembly, homodimer. It depends on Mg(2+) as a cofactor. Requires [4Fe-4S] cluster as cofactor.

Its subcellular location is the cytoplasm. The enzyme catalyses cytidine(32) in tRNA + S-sulfanyl-L-cysteinyl-[cysteine desulfurase] + AH2 + ATP = 2-thiocytidine(32) in tRNA + L-cysteinyl-[cysteine desulfurase] + A + AMP + diphosphate + H(+). Its pathway is tRNA modification. In terms of biological role, catalyzes the ATP-dependent 2-thiolation of cytidine in position 32 of tRNA, to form 2-thiocytidine (s(2)C32). The sulfur atoms are provided by the cysteine/cysteine desulfurase (IscS) system. This Pectobacterium atrosepticum (strain SCRI 1043 / ATCC BAA-672) (Erwinia carotovora subsp. atroseptica) protein is tRNA-cytidine(32) 2-sulfurtransferase.